The following is a 742-amino-acid chain: Serine/threonine-protein kinase SKY1 (742 aa).

The tract at residues 13-146 (KSAHLADTST…KDYRPGGYHP (134 aa)) is disordered. A compositionally biased stretch (polar residues) spans 19 to 35 (DTSTDASISCEEATSSQ). Residues 56–73 (TKSKLSLALQTSKSSSSA) are compositionally biased toward low complexity. Positions 81–101 (TSSKTEDFSTKSIKKKPDSGV) are enriched in basic and acidic residues. A compositionally biased stretch (low complexity) spans 106 to 127 (SIQSDSGPQSDSDLDSDSSISS). The span at 128 to 140 (CDERNEESLKDYR) shows a compositional bias: basic and acidic residues. A Protein kinase domain is found at 158-706 (YILVRKLGWG…AGGLVNHPWL (549 aa)). ATP contacts are provided by residues 164-172 (LGWGHFSTV) and K187. The active-site Proton acceptor is the D294. Phosphothreonine occurs at positions 383 and 386. 8 positions are modified to phosphoserine: S388, S393, S410, S427, S432, S445, S449, and S453. The interval 459–491 (INEDSNDNNNNDNSKNKNNNNNNSNNNNNEDIM) is disordered. Positions 465-489 (DNNNNDNSKNKNNNNNNSNNNNNED) are enriched in low complexity.

Belongs to the protein kinase superfamily. Ser/Thr protein kinase family.

The catalysed reaction is L-seryl-[protein] + ATP = O-phospho-L-seryl-[protein] + ADP + H(+). It catalyses the reaction L-threonyl-[protein] + ATP = O-phospho-L-threonyl-[protein] + ADP + H(+). In terms of biological role, constitutively active kinase, specifically and sequentially phosphorylates serine/arginine (SR)-type shuttling mRNA binding proteins in their RS dipeptide repeats. The chain is Serine/threonine-protein kinase SKY1 (SKY1) from Saccharomyces cerevisiae (strain ATCC 204508 / S288c) (Baker's yeast).